A 376-amino-acid chain; its full sequence is O-demethylpuromycin-O-methyltransferase (376 aa).

Residues 1–28 (MAPTEATRGGPADPAPAPEAHRGGHTEH) form a disordered region. Residues 19-28 (EAHRGGHTEH) are compositionally biased toward basic and acidic residues. S-adenosyl-L-methionine is bound by residues Asp235 and 261-263 (GDF). His281 functions as the Proton acceptor in the catalytic mechanism.

The protein belongs to the class I-like SAM-binding methyltransferase superfamily. Cation-independent O-methyltransferase family.

The enzyme catalyses O-demethylpuromycin + S-adenosyl-L-methionine = puromycin + S-adenosyl-L-homocysteine + H(+). This Streptomyces alboniger protein is O-demethylpuromycin-O-methyltransferase (dmpM).